Here is a 434-residue protein sequence, read N- to C-terminus: Bcl-2-like protein 13 (434 aa).

A BH4 motif is present at residues 14 to 30 (ETKYVVLSYLGLLSQEK). Position 35 is a phosphoserine (serine 35). A BH3 motif is present at residues 97–113 (IEDCLAHLGERVSQDLK). Residues 144–154 (ASGWNKLLVPL) carry the BH1 motif. The short motif at 190–203 (FIIQQGGWGSVFSL) is the BH2 element. Residues 224–245 (LPSDNSGQVSPPESPTVTTSWQ) are disordered. Residues 226-245 (SDNSGQVSPPESPTVTTSWQ) are compositionally biased toward polar residues. The A repeat unit spans residues 243 to 253 (SWQSESLPVSL). 7 positions are modified to phosphoserine: serine 256, serine 258, serine 300, serine 343, serine 347, serine 377, and serine 387. The stretch at 258–268 (SWHTESLPVSL) is one A; approximate repeat. The disordered stretch occupies residues 282–303 (EVKSLDSSGAGEKSENNSSNSD). The interval 363–398 (RPEAVERAEGAAQLSEERAGSRKKSHTGEAAAVRGA) is disordered. Positions 365-382 (EAVERAEGAAQLSEERAG) are enriched in basic and acidic residues. The helical transmembrane segment at 409–429 (VLLFGGAAAVAILAVAVGVAL) threads the bilayer.

It belongs to the Bcl-2 family. As to quaternary structure, monomer.

Its subcellular location is the mitochondrion membrane. Functionally, may promote the activation of caspase-3 and apoptosis. This chain is Bcl-2-like protein 13 (Bcl2l13), found in Mus musculus (Mouse).